A 121-amino-acid chain; its full sequence is Large ribosomal subunit protein bL20 (121 aa).

This sequence belongs to the bacterial ribosomal protein bL20 family.

In terms of biological role, binds directly to 23S ribosomal RNA and is necessary for the in vitro assembly process of the 50S ribosomal subunit. It is not involved in the protein synthesizing functions of that subunit. The protein is Large ribosomal subunit protein bL20 of Moorella thermoacetica (strain ATCC 39073 / JCM 9320).